The sequence spans 521 residues: Leucine-rich repeat-containing protein 24 (521 aa).

Residues 1 to 23 (MALRAPTLLLLLLGLLLLPLLPG) form the signal peptide. The 35-residue stretch at 24–58 (LPPRATGCPAACRCYSATVECGALRLRVVPPGIPP) folds into the LRRNT domain. LRR repeat units lie at residues 59–80 (GTQT…SLAP), 83–104 (ALRH…AFRA), 107–128 (RLLE…AFVG), 131–152 (QLRV…TFLH), 155–176 (RLQE…ALAG), and 179–200 (SLAL…ALQP). Residue Asn91 is glycosylated (N-linked (GlcNAc...) asparagine). The 56-residue stretch at 212-267 (NPWRCDCALHWLGSWIKEGGRRLLSSRDKKITCAEPPRLALQSLLEVSGGSLICIP) folds into the LRRCT domain. One can recognise an Ig-like C2-type domain in the interval 268–371 (PSVNVEPPEF…ARVPFHLLVN (104 aa)). Cys289 and Cys353 form a disulfide bridge. The interval 306–330 (QPRDGKPQAQAQLEGGAPGLGGHGT) is disordered. Asn342 and Asn371 each carry an N-linked (GlcNAc...) asparagine glycan. Residues 374-395 (RQQSQQLPDPQAPATRPVGHEP) are disordered. A helical membrane pass occupies residues 414–434 (AITAAIALLALTALLLAAMIC).

The protein resides in the membrane. This chain is Leucine-rich repeat-containing protein 24 (Lrrc24), found in Mus musculus (Mouse).